Here is a 161-residue protein sequence, read N- to C-terminus: Dihydrofolate reductase (161 aa).

The DHFR domain maps to 2 to 157 (TLSIIVAHDK…IPHTFLHLVR (156 aa)). 6-8 (IVA) provides a ligand contact to substrate. Residues 7–8 (VA) and 15–20 (IGYQNQ) contribute to the NADP(+) site. D28 serves as a coordination point for substrate. Residue 44 to 47 (GRKT) participates in NADP(+) binding. R58 lines the substrate pocket. Residues 63-66 (LTNQ) and 93-98 (FGGQTL) each bind NADP(+). Residue T112 coordinates substrate.

Belongs to the dihydrofolate reductase family.

The enzyme catalyses (6S)-5,6,7,8-tetrahydrofolate + NADP(+) = 7,8-dihydrofolate + NADPH + H(+). It participates in cofactor biosynthesis; tetrahydrofolate biosynthesis; 5,6,7,8-tetrahydrofolate from 7,8-dihydrofolate: step 1/1. Functionally, key enzyme in folate metabolism. Catalyzes an essential reaction for de novo glycine and purine synthesis, and for DNA precursor synthesis. The protein is Dihydrofolate reductase (folA) of Staphylococcus epidermidis.